The chain runs to 214 residues: ATP phosphoribosyltransferase (214 aa).

This sequence belongs to the ATP phosphoribosyltransferase family. Short subfamily. Heteromultimer composed of HisG and HisZ subunits.

It is found in the cytoplasm. It catalyses the reaction 1-(5-phospho-beta-D-ribosyl)-ATP + diphosphate = 5-phospho-alpha-D-ribose 1-diphosphate + ATP. The protein operates within amino-acid biosynthesis; L-histidine biosynthesis; L-histidine from 5-phospho-alpha-D-ribose 1-diphosphate: step 1/9. In terms of biological role, catalyzes the condensation of ATP and 5-phosphoribose 1-diphosphate to form N'-(5'-phosphoribosyl)-ATP (PR-ATP). Has a crucial role in the pathway because the rate of histidine biosynthesis seems to be controlled primarily by regulation of HisG enzymatic activity. In Nostoc sp. (strain PCC 7120 / SAG 25.82 / UTEX 2576), this protein is ATP phosphoribosyltransferase (hisG).